The following is a 502-amino-acid chain: ATP synthase subunit alpha (502 aa).

Gly169 to Thr176 serves as a coordination point for ATP.

It belongs to the ATPase alpha/beta chains family. As to quaternary structure, F-type ATPases have 2 components, CF(1) - the catalytic core - and CF(0) - the membrane proton channel. CF(1) has five subunits: alpha(3), beta(3), gamma(1), delta(1), epsilon(1). CF(0) has three main subunits: a(1), b(2) and c(9-12). The alpha and beta chains form an alternating ring which encloses part of the gamma chain. CF(1) is attached to CF(0) by a central stalk formed by the gamma and epsilon chains, while a peripheral stalk is formed by the delta and b chains.

It localises to the cell inner membrane. It carries out the reaction ATP + H2O + 4 H(+)(in) = ADP + phosphate + 5 H(+)(out). In terms of biological role, produces ATP from ADP in the presence of a proton gradient across the membrane. The alpha chain is a regulatory subunit. The protein is ATP synthase subunit alpha of Geotalea daltonii (strain DSM 22248 / JCM 15807 / FRC-32) (Geobacter daltonii).